Reading from the N-terminus, the 611-residue chain is Histone acetyltransferase KAT7 (611 aa).

Positions 1–173 (MPRRKRNAGS…SDLSHRPKRR (173 aa)) are disordered. Position 10 is a phosphoserine (serine 10). Low complexity predominate over residues 42–57 (VTRSSARLSQSSQDSS). A phosphoserine; by ATR mark is found at serine 50 and serine 53. At serine 57 the chain carries Phosphoserine; by PLK1. Serine 64 carries the post-translational modification Phosphoserine. Threonine 85 and threonine 88 each carry phosphothreonine; by CDK1. The segment covering 96–105 (QTRSSGSETE) has biased composition (polar residues). Serine 102 bears the Phosphoserine mark. The residue at position 104 (threonine 104) is a Phosphothreonine. Positions 110–125 (FSDRETKNTADHDESP) are enriched in basic and acidic residues. Serine 111 and serine 124 each carry phosphoserine. Position 128 is a phosphothreonine (threonine 128). Residues 134 to 145 (PSSESDIDISSP) show a composition bias toward low complexity. The span at 148–168 (SHDESIAKDMSLKDSGSDLSH) shows a compositional bias: basic and acidic residues. Serine 158, serine 162, serine 164, and serine 178 each carry phosphoserine. Residues 176 to 219 (HESYNFNMKCPTPGCNSLGHLTGKHERHFSISGCPLYHNLSADE) form a CCHHC-type zinc finger. N6-acetyllysine is present on residues lysine 199 and lysine 277. Lysine 323 participates in a covalent cross-link: Glycyl lysine isopeptide (Lys-Gly) (interchain with G-Cter in SUMO2). In terms of domain architecture, MYST-type HAT spans 332–607 (EGSNMIKTIA…MDPSCLKWTP (276 aa)). Residue lysine 338 forms a Glycyl lysine isopeptide (Lys-Gly) (interchain with G-Cter in ubiquitin) linkage. Residues 365 to 390 (LYMCEFCLKYMKSQTILRRHMAKCVW) form a C2HC MYST-type zinc finger. Cysteine 368, cysteine 371, histidine 384, and cysteine 388 together coordinate Zn(2+). Lysine 432 carries the N6-acetyllysine; by autocatalysis modification. Residues 475 to 477 (ILT) and 483 to 488 (RQGYGK) contribute to the acetyl-CoA site. Serine 506 is modified (phosphoserine). Glutamate 508 (proton donor/acceptor) is an active-site residue. Serine 512 and serine 521 together coordinate acetyl-CoA.

It belongs to the MYST (SAS/MOZ) family. Component of the HBO1 complex composed of KAT7/HBO1, MEAF6, ING4 or ING5, and one scaffold subunit: complexes containing BRPF scaffold (BRPF1, BRD1/BRPF2 or BRPF3) direct KAT7/HBO1 specificity towards H3K14ac, while complexes containing JADE scaffold (JADE1, JADE2 and JADE3) mediate acetylation of histone H4. Interacts with MCM2 and ORC1. Interacts with the androgen receptor (AR); in the presence of dihydrotestosterone. Interacts with CDT1. Interacts with MAP2K1 and CUL1. Interacts with p53/TP53; leading to inhibit histone acetyltransferase activity. Interacts with MIS18BP1. Post-translationally, phosphorylated at Ser-50 and Ser-53 by ATR in response to DNA damage, promoting its ubiquitination by the CRL4(DDB2) complex and subsequent degradation. Phosphorylation at Ser-50 and Ser-53 by ATR in response to ultraviolet-induced DNA, promotes localization to DNA damage sites. Phosphorylation at Ser-57 by PLK1 during mitosis seems important for prereplicative complex formation and DNA replication licensing, and requires prior phosphorylation at Thr-85 and Thr-88 by CDK1. Phosphorylated by MAP2K1, which accelerates its degradation. In terms of processing, ubiquitinated at Lys-338, leading to proteasomal degradation. Ubiquitinated by the CRL4(DDB2) complex following phosphorylation by ATR, leading to its subsequent degradation. Autoacetylation at Lys-432 is required for proper function. Ubiquitously expressed, with highest levels in testis.

It localises to the nucleus. The protein resides in the chromosome. It is found in the centromere. Its subcellular location is the cytoplasm. The protein localises to the cytosol. It catalyses the reaction L-lysyl-[histone] + acetyl-CoA = N(6)-acetyl-L-lysyl-[histone] + CoA + H(+). Its activity is regulated as follows. Histone acetyltransferase activity is inhibited by GMNN in the context of a complex with CDT1, inhibiting histone H4 acetylation and DNA replication licensing. Selectively inhibited by WM-3835 (N'-(4-fluoro-5-methyl-[1,1'-biphenyl]-3-carbonyl)-3- hydroxybenzenesulfonohydrazide) inhibitor. Functionally, catalytic subunit of histone acetyltransferase HBO1 complexes, which specifically mediate acetylation of histone H3 at 'Lys-14' (H3K14ac), thereby regulating various processes, such as gene transcription, protein ubiquitination, immune regulation, stem cell pluripotent and self-renewal maintenance and embryonic development. Some complexes also catalyze acetylation of histone H4 at 'Lys-5', 'Lys-8' and 'Lys-12' (H4K5ac, H4K8ac and H4K12ac, respectively), regulating DNA replication initiation, regulating DNA replication initiation. Specificity of the HBO1 complexes is determined by the scaffold subunit: complexes containing BRPF scaffold (BRPF1, BRD1/BRPF2 or BRPF3) direct KAT7/HBO1 specificity towards H3K14ac, while complexes containing JADE (JADE1, JADE2 and JADE3) scaffold direct KAT7/HBO1 specificity towards histone H4. H3K14ac promotes transcriptional elongation by facilitating the processivity of RNA polymerase II. Acts as a key regulator of hematopoiesis by forming a complex with BRD1/BRPF2, directing KAT7/HBO1 specificity towards H3K14ac and promoting erythroid differentiation. H3K14ac is also required for T-cell development. KAT7/HBO1-mediated acetylation facilitates two consecutive steps, licensing and activation, in DNA replication initiation: H3K14ac facilitates the activation of replication origins, and histone H4 acetylation (H4K5ac, H4K8ac and H4K12ac) facilitates chromatin loading of MCM complexes, promoting DNA replication licensing. Acts as a positive regulator of centromeric CENPA assembly: recruited to centromeres and mediates histone acetylation, thereby preventing centromere inactivation mediated by SUV39H1, possibly by increasing histone turnover/exchange. Involved in nucleotide excision repair: phosphorylation by ATR in response to ultraviolet irradiation promotes its localization to DNA damage sites, where it mediates histone acetylation to facilitate recruitment of XPC at the damaged DNA sites. Acts as an inhibitor of NF-kappa-B independently of its histone acetyltransferase activity. Plays a central role in the maintenance of leukemia stem cells in acute myeloid leukemia (AML). Acts by mediating acetylation of histone H3 at 'Lys-14' (H3K14ac), thereby facilitating the processivity of RNA polymerase II to maintain the high expression of key genes, such as HOXA9 and HOXA10 that help to sustain the functional properties of leukemia stem cells. This Homo sapiens (Human) protein is Histone acetyltransferase KAT7.